The sequence spans 454 residues: UDP-N-acetylmuramoylalanine--D-glutamate ligase (454 aa).

115–121 serves as a coordination point for ATP; it reads GTNGKTT.

The protein belongs to the MurCDEF family.

It is found in the cytoplasm. It catalyses the reaction UDP-N-acetyl-alpha-D-muramoyl-L-alanine + D-glutamate + ATP = UDP-N-acetyl-alpha-D-muramoyl-L-alanyl-D-glutamate + ADP + phosphate + H(+). It participates in cell wall biogenesis; peptidoglycan biosynthesis. In terms of biological role, cell wall formation. Catalyzes the addition of glutamate to the nucleotide precursor UDP-N-acetylmuramoyl-L-alanine (UMA). The protein is UDP-N-acetylmuramoylalanine--D-glutamate ligase of Thermoanaerobacter pseudethanolicus (strain ATCC 33223 / 39E) (Clostridium thermohydrosulfuricum).